A 429-amino-acid polypeptide reads, in one-letter code: Neuronal pentraxin-2 (429 aa).

The signal sequence occupies residues 1–14 (MLALLTVGVALAVA). N146 and N187 each carry an N-linked (GlcNAc...) asparagine glycan. In terms of domain architecture, Pentraxin (PTX) spans 221-422 (DAFKVSLPLR…GASKWPVETC (202 aa)). A disulfide bridge connects residues C251 and C311. Residues N275, E353, Q354, D355, and Q365 each contribute to the Ca(2+) site. N-linked (GlcNAc...) asparagine glycosylation occurs at N391.

In terms of assembly, homooligomer or heterooligomer (probably pentamer) with neuronal pentraxin receptor (NPTXR). The cofactor is Ca(2+).

It is found in the secreted. In terms of biological role, likely to play role in the modification of cellular properties that underlie long-term plasticity. Binds to agar matrix in a calcium-dependent manner. The protein is Neuronal pentraxin-2 (Nptx2) of Mus musculus (Mouse).